Consider the following 255-residue polypeptide: Myb-related protein Zm38 (255 aa).

HTH myb-type domains lie at 9–61 (KAHT…INYL) and 62–116 (RPDL…RRKL). 2 consecutive DNA-binding regions (H-T-H motif) follow at residues 37-61 (WRSL…INYL) and 89-112 (WSLI…NTHV).

Its subcellular location is the nucleus. Its function is as follows. Transcription factor that negatively regulates genes involved in anthocyanin biosynthesis. The polypeptide is Myb-related protein Zm38 (Zea mays (Maize)).